A 593-amino-acid chain; its full sequence is Bifunctional lycopene cyclase/phytoene synthase (593 aa).

Positions 1–242 (MAYDYALVHL…IVFGMAVFDQ (242 aa)) are lycopene beta-cyclase. The next 7 membrane-spanning stretches (helical) occupy residues 8 to 28 (VHLKYTIPLAALLTVIAYPIF), 31 to 51 (IHFLQIGSLIVVSFLATLPWD), 77 to 97 (IEELFFFVIQTYITSLFYILL), 117 to 136 (IARGKVIGQGILVALTLYGV), 147 to 167 (YLGLILAWAFPFALLTFTVAG), 169 to 189 (FILTLPLTSTVVPIIIPTVYL), and 231 to 251 (ILIVFGMAVFDQYLAIIFAFP). The tract at residues 249 to 593 (AFPHLFPKVP…KTVLKALFSA (345 aa)) is phytoene synthase.

The protein in the N-terminal section; belongs to the lycopene beta-cyclase family. In the C-terminal section; belongs to the phytoene/squalene synthase family.

It localises to the membrane. The catalysed reaction is all-trans-lycopene = gamma-carotene. The enzyme catalyses gamma-carotene = all-trans-beta-carotene. It catalyses the reaction 2 (2E,6E,10E)-geranylgeranyl diphosphate = 15-cis-phytoene + 2 diphosphate. It functions in the pathway carotenoid biosynthesis; beta-carotene biosynthesis. The protein operates within carotenoid biosynthesis; phytoene biosynthesis; all-trans-phytoene from geranylgeranyl diphosphate: step 1/1. Its function is as follows. Bifunctional enzyme that catalyzes the reactions from geranylgeranyl diphosphate to phytoene (phytoene synthase) and lycopene to beta-carotene via the intermediate gamma-carotene (lycopene cyclase). The chain is Bifunctional lycopene cyclase/phytoene synthase from Podospora anserina (strain S / ATCC MYA-4624 / DSM 980 / FGSC 10383) (Pleurage anserina).